Here is a 234-residue protein sequence, read N- to C-terminus: BTB/POZ domain-containing protein KCTD5 (234 aa).

A2 carries the N-acetylalanine modification. Phosphoserine is present on S10. The BTB domain occupies 44 to 146; the sequence is KWVRLNVGGT…LVKDKIRERD (103 aa). Residues 213 to 234 are disordered; it reads PYGTASEPSEKAKILQERGSRM. The segment covering 220-234 has biased composition (basic and acidic residues); that stretch reads PSEKAKILQERGSRM.

As to quaternary structure, homopentamer. Interacts (via C-terminus) with GRASP55/GORASP2. Interacts with CUL3 and with ubiquitinated proteins. Interacts with CRY1. (Microbial infection) Interacts with adeno-associated virus 2 (AAV-2) REP proteins.

It localises to the cytoplasm. It is found in the cytosol. The protein localises to the nucleus. Its function is as follows. Its interaction with CUL3 suggests that it may act as a substrate adapter in some E3 ligase complex. Does not affect the function of Kv channel Kv2.1/KCNB1, Kv1.2/KCNA2, Kv4.2/KCND2 and Kv3.4/KCNC4. The sequence is that of BTB/POZ domain-containing protein KCTD5 (KCTD5) from Homo sapiens (Human).